Consider the following 166-residue polypeptide: Crossover junction endodeoxyribonuclease RuvC (166 aa).

Catalysis depends on residues D7, E68, and D141. Mg(2+) contacts are provided by D7, E68, and D141.

It belongs to the RuvC family. As to quaternary structure, homodimer which binds Holliday junction (HJ) DNA. The HJ becomes 2-fold symmetrical on binding to RuvC with unstacked arms; it has a different conformation from HJ DNA in complex with RuvA. In the full resolvosome a probable DNA-RuvA(4)-RuvB(12)-RuvC(2) complex forms which resolves the HJ. It depends on Mg(2+) as a cofactor.

The protein resides in the cytoplasm. It carries out the reaction Endonucleolytic cleavage at a junction such as a reciprocal single-stranded crossover between two homologous DNA duplexes (Holliday junction).. The RuvA-RuvB-RuvC complex processes Holliday junction (HJ) DNA during genetic recombination and DNA repair. Endonuclease that resolves HJ intermediates. Cleaves cruciform DNA by making single-stranded nicks across the HJ at symmetrical positions within the homologous arms, yielding a 5'-phosphate and a 3'-hydroxyl group; requires a central core of homology in the junction. The consensus cleavage sequence is 5'-(A/T)TT(C/G)-3'. Cleavage occurs on the 3'-side of the TT dinucleotide at the point of strand exchange. HJ branch migration catalyzed by RuvA-RuvB allows RuvC to scan DNA until it finds its consensus sequence, where it cleaves and resolves the cruciform DNA. The protein is Crossover junction endodeoxyribonuclease RuvC of Koribacter versatilis (strain Ellin345).